The chain runs to 253 residues: TCF3 fusion partner (253 aa).

2 disordered regions span residues 49–72 (SGGLGGSGLRERDEEEEAARGRRR) and 142–211 (DEGS…PELA). Phosphoserine is present on Ser167. The span at 170 to 181 (RRTPAPPEPGSP) shows a compositional bias: pro residues. Phosphothreonine is present on Thr172. 2 positions are modified to phosphoserine: Ser180 and Ser188. Thr207 bears the Phosphothreonine mark. A Glycyl lysine isopeptide (Lys-Gly) (interchain with G-Cter in SUMO2) cross-link involves residue Lys216. The tract at residues 234 to 253 (VSRGPDKLLPYPTLASPASD) is disordered. Ser249 and Ser252 each carry phosphoserine.

Interacts with NOL3; translocates NOL3 into the nucleus and negatively regulated TFPT-induced cell death. Component of the chromatin remodeling INO80 complex; specifically part of a complex module associated with the N-terminus of INO80.

It localises to the nucleus. Functionally, appears to promote apoptosis in a p53/TP53-independent manner. Its function is as follows. Putative regulatory component of the chromatin remodeling INO80 complex which is involved in transcriptional regulation, DNA replication and probably DNA repair. The polypeptide is TCF3 fusion partner (TFPT) (Homo sapiens (Human)).